Consider the following 99-residue polypeptide: Virion membrane protein OPG135 (99 aa).

A signal peptide spans 1–22 (MSCYTAILKSVGGLALFQVANG). At 23 to 45 (AIDLCRHFFMYFCEQKLRPNSFW) the chain is on the intravirion side. The helical transmembrane segment at 46 to 66 (FVVVRAIASMIMYLVLGIALL) threads the bilayer. The Virion surface portion of the chain corresponds to 67–83 (YISEQDDKKNTNNDGSN). Residues 73-89 (DKKNTNNDGSNNDKRNE) show a composition bias toward basic and acidic residues. Residues 73-99 (DKKNTNNDGSNNDKRNESSINSNSSPK) form a disordered region. Asn-88 carries N-linked (GlcNAc...) asparagine; by host glycosylation. A compositionally biased stretch (polar residues) spans 90–99 (SSINSNSSPK).

The protein belongs to the oerthopoxvirus OPG135 family.

The protein localises to the virion membrane. It is found in the host cytoplasm. In terms of biological role, envelope protein. Required for an early step in virion morphogenesis. This chain is Virion membrane protein OPG135 (OPG135), found in Homo sapiens (Human).